The primary structure comprises 176 residues: Large ribosomal subunit protein bL19 (176 aa).

This sequence belongs to the bacterial ribosomal protein bL19 family.

In terms of biological role, this protein is located at the 30S-50S ribosomal subunit interface and may play a role in the structure and function of the aminoacyl-tRNA binding site. This Sinorhizobium fredii (strain NBRC 101917 / NGR234) protein is Large ribosomal subunit protein bL19.